The chain runs to 828 residues: MKNKLINLRSKHIYKLIIIIFFCIILKYYKWCDFKNKVFFIQLVYSFAKKSVCTSSLDDSTCHTVTFGELDVSNNSVVRLKVMRKGGKGYFLTIRRDYVTVSYYLKYVKDIPLEFREIIDIFNNHKFEQYTQEQINKYTYTCNVRKIEDIDKYDEKNPTKFHEYTRGEACRCQTYNYFKDDEFIKRAKLKCIYYNMLFTESATVYSRHCPIIDLMHFAVYDIEYPPIFNTIVNITIEEYYYNDVSSVLNNKSDLVTKEKKYQLNDTITEIRDDYFDLWLFLKGETHGKRTLVNLSNDYIVIPSSPINNRDVIASDITRNCGLSQNSPLLKGCNYSSICNIMHPCLRKAMMLPKYMFDLSGKTCGKLGVSLNTWRKSEGNFCGSEAGYCISNNLKKYYDIHNSASIKDGISLSKYKIKNIYNSEPQTKIYESYKLPDYLKDKIKNNNHAEMDENDLDNKIFYKPNVAAHSQFIDYKYNGNHSVEIKFETDAIEVYEIRPVSIATITHVTIPNDCASNNSNSNECVLIIHVWNNSKFVGSNFSCSIACTNKETDQLASHINPIAPVRAFIGPNKNYAFYFIIKFLINKEITTLCKAIVKDSNGKECSIEEFELQSKESVHIVESEVDETTDQVVVEHHTQSPDIKNPDEYVCKCTINLLCYVINFKTCSNYYINTVKTLIGKFAIIAILIILAPALIPLLPFFLNFFFLFISTILKLYQSIISTIGQIRIRNNDKPIIYKKKIHDMKTNYLSVSSYSSLSDSSSIYSTDSVSSMRKNKKKFNKNNISSNIKHKKGGKKVKQKEPNRNSNHTSHEYADTSPSGKSKIPPLR.

Residues 1–32 (MKNKLINLRSKHIYKLIIIIFFCIILKYYKWC) form the signal peptide. At 33–680 (DFKNKVFFIQ…INTVKTLIGK (648 aa)) the chain is on the extracellular side. Residues C53 and C62 are joined by a disulfide bond. A glycan (N-linked (GlcNAc...) asparagine) is linked at N74. Disulfide bonds link C142-C209, C170-C381, C172-C191, and C363-C388. Residues 174-191 (TYNYFKDDEFIKRAKLKC) form a cd loop; involved in gamete fusion region. N-linked (GlcNAc...) asparagine glycans are attached at residues N233, N250, N264, N293, and N333. N479, N516, N531, and N539 each carry an N-linked (GlcNAc...) asparagine glycan. C546 and C592 form a disulfide bridge. Residues 681-701 (FAIIAILIILAPALIPLLPFF) traverse the membrane as a helical segment. Topologically, residues 702–828 (LNFFFLFIST…SGKSKIPPLR (127 aa)) are cytoplasmic. Positions 773–828 (RKNKKKFNKNNISSNIKHKKGGKKVKQKEPNRNSNHTSHEYADTSPSGKSKIPPLR) are disordered. Residues 788-798 (IKHKKGGKKVK) show a composition bias toward basic residues. A compositionally biased stretch (basic and acidic residues) spans 799-814 (QKEPNRNSNHTSHEYA).

It belongs to the HAP2/GCS1 family.

Its subcellular location is the cell membrane. Functionally, during fertilization, required on male gametes for their fusion with female gametes, and for subsequent ookinete formation in the host. Thereby, required for mosquito-mediated transmission to other animals. Probably initiates the fusion of gamete cell membranes by inserting part of its extracellular domain into the cell membrane of a female gamete. The chain is Hapless 2 from Plasmodium berghei (strain Anka).